Here is a 365-residue protein sequence, read N- to C-terminus: MLLMRRFAFLTSSVYFKYIPIYSQYHYSSQFPINMNPKKVAQLPVHNKSTLPPQEIIDLFKITFLEELYPKDQDNEKSPLTEQIQAVKSDLYNRDYNAAFNNDSKRIAYCCRWSPSRATSYASVFAHFPELLKIIRCEIDDKDSNVLCIGGGAGGELVALASIFTLSRDFSSKFASALKIDNEVNKKPRNLNIQLVDIADWSTVVEKLTATIKSKWLYGDSEAESFNVNFTHKDCLQMTEPQDIKIYQGLDLITLLFTTNELFTQKKVESIKFLQRLNENCAPGCHLLILESAGSYSHITINNKKFPIQFLIDTILVGNRKDKGTTGPWSLVSENDSIWYRMDPKLDYSIPLENMRFFYRLYVKN.

It belongs to the class I-like SAM-binding methyltransferase superfamily.

The protein localises to the cytoplasm. It is found in the nucleus. It catalyses the reaction uridine(2843) in 25S rRNA + S-adenosyl-L-methionine = N(3)-methyluridine(2843) in 25S rRNA + S-adenosyl-L-homocysteine + H(+). In terms of biological role, S-adenosyl-L-methionine-dependent methyltransferase that specifically methylates the N(3) position of uridine 2843 (m3U2843) in 25S rRNA. This chain is 25S rRNA (uridine(2843)-N(3))-methyltransferase (BMT6), found in Saccharomyces cerevisiae (strain ATCC 204508 / S288c) (Baker's yeast).